The sequence spans 655 residues: Ankyrin repeat and SAM domain-containing protein 3 (655 aa).

The tract at residues 1-421 is interaction with NEK7; that stretch reads MSELSDEASE…PGSEPQTEKS (421 aa). Phosphoserine occurs at positions 2 and 5. 6 ANK repeats span residues 34–64, 68–97, 101–130, 134–163, 168–197, and 201–220; these read DVPL…DLNK, GGWT…SVNV, EGQT…ELEM, HGWT…NANV, YGYT…KVDT, and SGAT…IVAL. N96 carries the 3-hydroxyasparagine modification. 5 positions are modified to phosphoserine: S201, S225, S243, S244, and S245. The tract at residues 314 to 426 is disordered; it reads YRDVTSPINE…QTEKSPYSGP (113 aa). T318 carries the phosphothreonine modification. Residues S319, S366, S369, and S373 each carry the phosphoserine modification. The segment covering 378 to 395 has biased composition (basic residues); that stretch reads KSSVRKQTRSYLKNKSRH. Positions 424 to 487 constitute an SAM domain; sequence SGPQDLATLL…TSAIARWHSS (64 aa). Residues 500 to 575 adopt a coiled-coil conformation; the sequence is ADRLETEMQE…AALVLDQLRA (76 aa). S540 bears the Phosphoserine mark.

Homooligomer. Interacts (via SAM domain) with ANKS6 (via SAM domain). Interacts with BICC1. Interacts with NPHP1. Interacts with NEK8. Interacts with HIF1AN. Interacts with NEK7; this interaction alters the subcellular distribution of NEK7 by preventing its nuclear translocation. In terms of processing, hydroxylated at Asn-96, most probably by HIF1AN. Phosphorylations at Ser-5, Ser-225, Thr-318, Ser-319, Ser-366 and Ser-369 occur in a NEK7-dependent manner. Post-translationally, polyubiquitinated. As to expression, kidney (at protein level).

The protein resides in the cell projection. Its subcellular location is the cilium. It is found in the cytoplasm. In terms of biological role, may be involved in vasopressin signaling in the kidney. This Mus musculus (Mouse) protein is Ankyrin repeat and SAM domain-containing protein 3 (Anks3).